The sequence spans 344 residues: Pyruvate dehydrogenase E1 component subunit alpha (344 aa).

Pyruvate-binding residues include histidine 55, tyrosine 81, arginine 82, alanine 130, isoleucine 132, aspartate 168, glycine 169, and asparagine 197. 8 residues coordinate thiamine diphosphate: tyrosine 81, arginine 82, alanine 130, isoleucine 132, aspartate 168, glycine 169, asparagine 197, and histidine 266. Aspartate 168 serves as a coordination point for Mg(2+). Mg(2+) is bound at residue asparagine 197.

Heterodimer of an alpha and a beta chain. The cofactor is thiamine diphosphate. Mg(2+) serves as cofactor.

It is found in the plastid. It localises to the chloroplast. The enzyme catalyses N(6)-[(R)-lipoyl]-L-lysyl-[protein] + pyruvate + H(+) = N(6)-[(R)-S(8)-acetyldihydrolipoyl]-L-lysyl-[protein] + CO2. Functionally, the pyruvate dehydrogenase complex catalyzes the overall conversion of pyruvate to acetyl-CoA and CO(2). It contains multiple copies of three enzymatic components: pyruvate dehydrogenase (E1), dihydrolipoamide acetyltransferase (E2) and lipoamide dehydrogenase (E3). This Porphyra purpurea (Red seaweed) protein is Pyruvate dehydrogenase E1 component subunit alpha (pdhA).